Here is a 337-residue protein sequence, read N- to C-terminus: uncharacterized protein (337 aa).

The segment covering 1 to 11 has biased composition (acidic residues); sequence MSEIEEEEEEG. The interval 1–20 is disordered; it reads MSEIEEEEEEGSASAITGSR. An N-acetylserine modification is found at Ser-2. Residues 50–130 adopt a coiled-coil conformation; sequence ALSTRVSALE…LQRDVSKLEG (81 aa). Positions 139-242 are disordered; sequence LQDDDQNAGT…PISPRRHSVS (104 aa). Residues 170-182 are compositionally biased toward low complexity; it reads SSIQSQQASEAIE. A compositionally biased stretch (polar residues) spans 197-211; sequence LSASLPLVSQTTTPR. Thr-213 is modified (phosphothreonine). A Phosphoserine modification is found at Ser-217. The span at 223 to 233 shows a compositional bias: polar residues; the sequence is ASGTPKTTSRP. At Thr-226 the chain carries Phosphothreonine. Residue Ser-235 is modified to Phosphoserine.

This is an uncharacterized protein from Arabidopsis thaliana (Mouse-ear cress).